We begin with the raw amino-acid sequence, 727 residues long: YTH domain-containing protein 1 (727 aa).

Over residues 1–12 the composition is skewed to basic and acidic residues; the sequence is MAADSREEKDGE. A disordered region spans residues 1–338; sequence MAADSREEKD…KHEKLSSSVR (338 aa). Residue S35 is modified to Phosphoserine. Over residues 50–59 the composition is skewed to basic and acidic residues; sequence DRMESTDTKR. Polar residues predominate over residues 63 to 90; sequence SVHSRQLVSKPLSSSVSNNKRIVSTKGK. Residues 91 to 115 are compositionally biased toward basic and acidic residues; the sequence is SATEYKNEEYQRSERNKRLDADRKI. K96 is covalently cross-linked (Glycyl lysine isopeptide (Lys-Gly) (interchain with G-Cter in SUMO2)). A phosphoserine mark is found at S118 and S120. Residues 124 to 144 show a composition bias toward basic and acidic residues; that stretch reads EPYKNQPEKTCVRKRDPERRA. S146 is modified (phosphoserine). A Phosphothreonine modification is found at T148. 2 stretches are compositionally biased toward basic and acidic residues: residues 151–163 and 170–185; these read GSER…DRRA and SKEE…DHET. Positions 199 to 254 are enriched in acidic residues; sequence ENEEEGVEEDVEEDEEVEEDAEEDEEVDEDGEEEEEEEEEEEEEEEEEEEEYEQDE. Basic and acidic residues predominate over residues 255–270; the sequence is RDQKEEGNDYDTRSEA. Residues 280-289 are compositionally biased toward polar residues; it reads FTDGSVRSGS. A phosphoserine mark is found at S308, S315, S317, S318, and S320. Positions 315–325 are enriched in low complexity; the sequence is SGSSASESYAG. The 138-residue stretch at 355-492 folds into the YTH domain; sequence ARFFLIKSNN…ECGTQLCLLF (138 aa). Residues 361-363 and 377-378 each bind RNA; these read KSN and WS. A Phosphoserine modification is found at S424. W428 contributes to the RNA binding site. Position 435 is a phosphoserine (S435). Position 476 (D476) interacts with RNA. Residues 508-523 show a composition bias toward basic residues; sequence RHKRRMHSQPRSRGRP. Disordered regions lie at residues 508 to 564, 607 to 643, and 669 to 727; these read RHKR…PGYL, GMPP…HPVP, and AVVS…RYRR. The segment covering 524–564 has biased composition (basic and acidic residues); the sequence is SRREPVRDVGRRRPEDYDIHNSRKKPRIDYPPEFHQRPGYL. Residue S545 is modified to Phosphoserine. Residues 679 to 727 are compositionally biased toward basic and acidic residues; it reads RERDRERERDRPRDNRRDRERDRGRDRERERERLCDRDRDRGERGRYRR.

Interacts with SRSF1. Interacts with SRSF2. Interacts with SRSF3. Interacts with SRSF7. Interacts with SRSF10. Interacts with CPSF6. Interacts with KHDRBS1/SAM68. Interacts with TRA2B. Interacts with KHDRBS3. Interacts with EMD. Interacts with RBMX. Interacts with ZCCHC8. Tyrosine phosphorylated.

The protein resides in the nucleus. The protein localises to the nucleus speckle. Its function is as follows. Regulator of alternative splicing that specifically recognizes and binds N6-methyladenosine (m6A)-containing RNAs. M6A is a modification present at internal sites of mRNAs and some non-coding RNAs and plays a role in the efficiency of mRNA splicing, processing and stability. Acts as a key regulator of exon-inclusion or exon-skipping during alternative splicing via interaction with mRNA splicing factors SRSF3 and SRSF10. Specifically binds m6A-containing mRNAs and promotes recruitment of SRSF3 to its mRNA-binding elements adjacent to m6A sites, leading to exon-inclusion during alternative splicing. In contrast, interaction with SRSF3 prevents interaction with SRSF10, a splicing factor that promotes exon skipping: this prevents SRSF10 from binding to its mRNA-binding sites close to m6A-containing regions, leading to inhibit exon skipping during alternative splicing. May also regulate alternative splice site selection. Also involved in nuclear export of m6A-containing mRNAs via interaction with SRSF3: interaction with SRSF3 facilitates m6A-containing mRNA-binding to both SRSF3 and NXF1, promoting mRNA nuclear export. Involved in S-adenosyl-L-methionine homeostasis by regulating expression of MAT2A transcripts, probably by binding m6A-containing MAT2A mRNAs. Also recognizes and binds m6A on other RNA molecules. Involved in random X inactivation mediated by Xist RNA: recognizes and binds m6A-containing Xist and promotes transcription repression activity of Xist. Also recognizes and binds m6A-containing single-stranded DNA. Involved in germline development: required for spermatogonial development in males and oocyte growth and maturation in females, probably via its role in alternative splicing. This chain is YTH domain-containing protein 1, found in Homo sapiens (Human).